Consider the following 234-residue polypeptide: MAAEKCAEEFGDSSAASLKIVPKDYAYPLLEDPQGALTTPTEGGRTLVTRGGFNYFHYGCDGHQDAGWGCGYRTLQSAISWIQRRQGSSGHVPSIREIQQILVAIGDKGPEFVGSRDWIGTLEEFYVIDVLHQVPCKILHAKELSSDEILGELRSYFEKYQGFVAMGGLSDTASKAITGYHCSARGRIFLQVVDPHFVGVPSSRQHLIDLGYVRWVPVDEFAGSTYNLCLILQP.

Active-site residues include cysteine 70, aspartate 194, and histidine 196.

The protein belongs to the peptidase C78 family.

Its function is as follows. Thiol protease which recognizes and hydrolyzes the peptide bond at the C-terminal Gly of UFM1, a ubiquitin-like modifier protein bound to a number of target proteins. This Drosophila melanogaster (Fruit fly) protein is Probable Ufm1-specific protease 1.